The primary structure comprises 140 residues: Lysozyme c-1 (140 aa).

An N-terminal signal peptide occupies residues 1 to 20 (MKVFSTVLLAIVACCAVAEA). A C-type lysozyme domain is found at 21–140 (KTFGKCELAK…KKLPNVSSCF (120 aa)). 4 disulfides stabilise this stretch: Cys26–Cys139, Cys47–Cys128, Cys81–Cys94, and Cys90–Cys108. Residues Glu52 and Asp69 contribute to the active site.

Belongs to the glycosyl hydrolase 22 family. As to expression, expressed in salivary glands and Malpighian tubules.

The enzyme catalyses Hydrolysis of (1-&gt;4)-beta-linkages between N-acetylmuramic acid and N-acetyl-D-glucosamine residues in a peptidoglycan and between N-acetyl-D-glucosamine residues in chitodextrins.. Its function is as follows. Lysozymes have primarily a bacteriolytic function; those in tissues and body fluids are associated with the monocyte-macrophage system and enhance the activity of immunoagents. The polypeptide is Lysozyme c-1 (Anopheles gambiae (African malaria mosquito)).